A 478-amino-acid polypeptide reads, in one-letter code: Ribosomal RNA small subunit methyltransferase F (478 aa).

Residues 123–129 (AAAPGSK), Glu147, Asp174, and Asp192 contribute to the S-adenosyl-L-methionine site. Residue Cys245 is the Nucleophile of the active site.

This sequence belongs to the class I-like SAM-binding methyltransferase superfamily. RsmB/NOP family.

Its subcellular location is the cytoplasm. It catalyses the reaction cytidine(1407) in 16S rRNA + S-adenosyl-L-methionine = 5-methylcytidine(1407) in 16S rRNA + S-adenosyl-L-homocysteine + H(+). In terms of biological role, specifically methylates the cytosine at position 1407 (m5C1407) of 16S rRNA. The polypeptide is Ribosomal RNA small subunit methyltransferase F (Vibrio campbellii (strain ATCC BAA-1116)).